Consider the following 490-residue polypeptide: UDP-N-acetylmuramate--L-alanine ligase (490 aa).

Position 133–139 (133–139) interacts with ATP; the sequence is GTHGKTS.

The protein belongs to the MurCDEF family.

The protein resides in the cytoplasm. The catalysed reaction is UDP-N-acetyl-alpha-D-muramate + L-alanine + ATP = UDP-N-acetyl-alpha-D-muramoyl-L-alanine + ADP + phosphate + H(+). It functions in the pathway cell wall biogenesis; peptidoglycan biosynthesis. Its function is as follows. Cell wall formation. In Saccharopolyspora erythraea (strain ATCC 11635 / DSM 40517 / JCM 4748 / NBRC 13426 / NCIMB 8594 / NRRL 2338), this protein is UDP-N-acetylmuramate--L-alanine ligase.